We begin with the raw amino-acid sequence, 420 residues long: Serine/threonine transporter SstT (420 aa).

The next 9 membrane-spanning stretches (helical) occupy residues 14–34 (IMIG…WTFI), 40–60 (LFVG…IIAS), 71–91 (YVGS…VVAV), 172–192 (ITTV…GLVF), 210–230 (LLLL…AIVF), 283–303 (IPLG…IMTL), 309–329 (LGMS…AVSA), 332–352 (ASGI…LFGI), and 356–376 (IAMQ…SIET).

This sequence belongs to the dicarboxylate/amino acid:cation symporter (DAACS) (TC 2.A.23) family.

The protein localises to the cell membrane. It carries out the reaction L-serine(in) + Na(+)(in) = L-serine(out) + Na(+)(out). The enzyme catalyses L-threonine(in) + Na(+)(in) = L-threonine(out) + Na(+)(out). Involved in the import of serine and threonine into the cell, with the concomitant import of sodium (symport system). This Enterococcus faecalis (strain ATCC 700802 / V583) protein is Serine/threonine transporter SstT.